The following is a 418-amino-acid chain: Gamma-glutamyl phosphate reductase (418 aa).

It belongs to the gamma-glutamyl phosphate reductase family.

It is found in the cytoplasm. It catalyses the reaction L-glutamate 5-semialdehyde + phosphate + NADP(+) = L-glutamyl 5-phosphate + NADPH + H(+). It participates in amino-acid biosynthesis; L-proline biosynthesis; L-glutamate 5-semialdehyde from L-glutamate: step 2/2. In terms of biological role, catalyzes the NADPH-dependent reduction of L-glutamate 5-phosphate into L-glutamate 5-semialdehyde and phosphate. The product spontaneously undergoes cyclization to form 1-pyrroline-5-carboxylate. This chain is Gamma-glutamyl phosphate reductase, found in Pelodictyon phaeoclathratiforme (strain DSM 5477 / BU-1).